Reading from the N-terminus, the 77-residue chain is Protein IDA (77 aa).

Residues 1–26 (MAPCRTMMVLLCFVLFLAASSSCVAA) form the signal peptide. The RLK5-binding stretch occupies residues 56–69 (GVPIPPSAPSKRHN).

As to quaternary structure, interaction with RLK5. In terms of tissue distribution, expressed specifically in the floral abscission zone.

The protein localises to the secreted. The protein resides in the extracellular space. Functionally, involved in an ethylene-independent separation step of floral abscission. Promotes abscission zone (AZ) cells rounding. May act with RLK5 and HSL2 as ligand-receptor pairs. This Arabidopsis thaliana (Mouse-ear cress) protein is Protein IDA.